The sequence spans 61 residues: Large ribosomal subunit protein bL28 (61 aa).

The segment at 1-26 (MAKDFVTGRKTTFGKKRSHALNQTNR) is disordered.

This sequence belongs to the bacterial ribosomal protein bL28 family.

The chain is Large ribosomal subunit protein bL28 from Ligilactobacillus salivarius (strain UCC118) (Lactobacillus salivarius).